A 159-amino-acid polypeptide reads, in one-letter code: Ribosomal RNA large subunit methyltransferase H (159 aa).

Residues Leu76, Gly107, and Leu126–Leu131 contribute to the S-adenosyl-L-methionine site.

Belongs to the RNA methyltransferase RlmH family. As to quaternary structure, homodimer.

The protein resides in the cytoplasm. It catalyses the reaction pseudouridine(1915) in 23S rRNA + S-adenosyl-L-methionine = N(3)-methylpseudouridine(1915) in 23S rRNA + S-adenosyl-L-homocysteine + H(+). Functionally, specifically methylates the pseudouridine at position 1915 (m3Psi1915) in 23S rRNA. This Cupriavidus pinatubonensis (strain JMP 134 / LMG 1197) (Cupriavidus necator (strain JMP 134)) protein is Ribosomal RNA large subunit methyltransferase H.